The following is a 455-amino-acid chain: Bifunctional protein GlmU (455 aa).

The segment at 1–227 is pyrophosphorylase; sequence MKLKAIILAA…YEEIMAVNSR (227 aa). UDP-N-acetyl-alpha-D-glucosamine-binding positions include 8-11, K22, Q72, and 77-78; these read LAAG and GT. D100 contacts Mg(2+). UDP-N-acetyl-alpha-D-glucosamine-binding residues include G137, E152, N167, and N225. N225 is a binding site for Mg(2+). Positions 228–248 are linker; it reads EQLADVEAIMRRRIAKKHMAN. The tract at residues 249-455 is N-acetyltransferase; the sequence is GVTIMNPEHV…WTKRKGLLKK (207 aa). UDP-N-acetyl-alpha-D-glucosamine is bound by residues R330 and K348. The Proton acceptor role is filled by H360. The UDP-N-acetyl-alpha-D-glucosamine site is built by Y363 and N374. Acetyl-CoA-binding positions include 383 to 384, S402, C420, and R437; that span reads NY.

This sequence in the N-terminal section; belongs to the N-acetylglucosamine-1-phosphate uridyltransferase family. In the C-terminal section; belongs to the transferase hexapeptide repeat family. In terms of assembly, homotrimer. Mg(2+) serves as cofactor.

It localises to the cytoplasm. The enzyme catalyses alpha-D-glucosamine 1-phosphate + acetyl-CoA = N-acetyl-alpha-D-glucosamine 1-phosphate + CoA + H(+). The catalysed reaction is N-acetyl-alpha-D-glucosamine 1-phosphate + UTP + H(+) = UDP-N-acetyl-alpha-D-glucosamine + diphosphate. Its pathway is nucleotide-sugar biosynthesis; UDP-N-acetyl-alpha-D-glucosamine biosynthesis; N-acetyl-alpha-D-glucosamine 1-phosphate from alpha-D-glucosamine 6-phosphate (route II): step 2/2. It participates in nucleotide-sugar biosynthesis; UDP-N-acetyl-alpha-D-glucosamine biosynthesis; UDP-N-acetyl-alpha-D-glucosamine from N-acetyl-alpha-D-glucosamine 1-phosphate: step 1/1. The protein operates within bacterial outer membrane biogenesis; LPS lipid A biosynthesis. Catalyzes the last two sequential reactions in the de novo biosynthetic pathway for UDP-N-acetylglucosamine (UDP-GlcNAc). The C-terminal domain catalyzes the transfer of acetyl group from acetyl coenzyme A to glucosamine-1-phosphate (GlcN-1-P) to produce N-acetylglucosamine-1-phosphate (GlcNAc-1-P), which is converted into UDP-GlcNAc by the transfer of uridine 5-monophosphate (from uridine 5-triphosphate), a reaction catalyzed by the N-terminal domain. The polypeptide is Bifunctional protein GlmU (Alkaliphilus oremlandii (strain OhILAs) (Clostridium oremlandii (strain OhILAs))).